Here is a 523-residue protein sequence, read N- to C-terminus: 2-isopropylmalate synthase (523 aa).

The 263-residue stretch at 5–267 folds into the Pyruvate carboxyltransferase domain; sequence VIIFDTTLRD…ETGINAKEIH (263 aa). Mn(2+) contacts are provided by Asp14, His202, His204, and Asn238. The tract at residues 392–523 is regulatory domain; the sequence is GLQQLVVHSD…KQARTELGGV (132 aa).

The protein belongs to the alpha-IPM synthase/homocitrate synthase family. LeuA type 1 subfamily. As to quaternary structure, homodimer. The cofactor is Mn(2+).

The protein localises to the cytoplasm. The catalysed reaction is 3-methyl-2-oxobutanoate + acetyl-CoA + H2O = (2S)-2-isopropylmalate + CoA + H(+). It participates in amino-acid biosynthesis; L-leucine biosynthesis; L-leucine from 3-methyl-2-oxobutanoate: step 1/4. Its function is as follows. Catalyzes the condensation of the acetyl group of acetyl-CoA with 3-methyl-2-oxobutanoate (2-ketoisovalerate) to form 3-carboxy-3-hydroxy-4-methylpentanoate (2-isopropylmalate). The chain is 2-isopropylmalate synthase from Shewanella loihica (strain ATCC BAA-1088 / PV-4).